Consider the following 828-residue polypeptide: Periplasmic nitrate reductase (828 aa).

Positions 1–31 form a signal peptide, tat-type signal; it reads MKLSRRSFMKANAVAAAAAAAGLSVPGVARA. In terms of domain architecture, 4Fe-4S Mo/W bis-MGD-type spans 39–95; sequence IKWDKAPCRFCGTGCGVLVGTQQGRVVACQGDPDAPVNRGLNCIKGYFLPKIMYGKD. [4Fe-4S] cluster is bound by residues cysteine 46, cysteine 49, cysteine 53, and cysteine 81. Residues lysine 83, glutamine 150, asparagine 175, cysteine 179, 212-219, 243-247, 262-264, methionine 372, glutamine 376, asparagine 482, 508-509, lysine 531, aspartate 558, and 718-727 contribute to the Mo-bis(molybdopterin guanine dinucleotide) site; these read WGSNMAEM, STFQH, QSD, SD, and TGRVLEHWHT. Phenylalanine 794 is a substrate binding site. Mo-bis(molybdopterin guanine dinucleotide) is bound by residues asparagine 802 and lysine 819.

The protein belongs to the prokaryotic molybdopterin-containing oxidoreductase family. NasA/NapA/NarB subfamily. In terms of assembly, component of the periplasmic nitrate reductase NapAB complex composed of NapA and NapB. [4Fe-4S] cluster is required as a cofactor. It depends on Mo-bis(molybdopterin guanine dinucleotide) as a cofactor. In terms of processing, predicted to be exported by the Tat system. The position of the signal peptide cleavage has not been experimentally proven.

It localises to the periplasm. It catalyses the reaction 2 Fe(II)-[cytochrome] + nitrate + 2 H(+) = 2 Fe(III)-[cytochrome] + nitrite + H2O. Catalytic subunit of the periplasmic nitrate reductase complex NapAB. Receives electrons from NapB and catalyzes the reduction of nitrate to nitrite. The chain is Periplasmic nitrate reductase from Salmonella paratyphi A (strain ATCC 9150 / SARB42).